The following is a 450-amino-acid chain: MAHITFDTKNIENFVADHELDEMQPLIKMADEQLRNRSGAGAEYSDWITLPTDYDKDEFARIQTAAQKIQSDSKVLVVIGIGGSYLGAKMAVDFLNPMFNNELADNQRQGVKIYFAGNSTSASYINDLVRVIGDQDFSVNVISKSGTTTEPSIAFRVFKQLLEKKYGAEAAKQRIYATTDANRGALHDEAKISGYETFTIPDGVGGRFSVLTAVGLLPIAASGADIEALMTGARDAQEEYSDSDIKNNEAYKYAAVRRILYDKGYTTELLINWEPTMQYLSEWWKQLMGESEGKNQKGIYPSSANFSTDLHSLGQYIQEGRRDLFETVVKLDNPVSNIDLPHEDGNNDGLQYLEGVTIDEVNTKASQGVTLAHVDGGVPNLAVHLPAQDAYSLGYLIYFFEIAVGASGYTFGINPFNQPGVEAYKTAMFALLGKPGYEEQTKVYRARLGK.

Glutamate 290 (proton donor) is an active-site residue. Residues histidine 311 and lysine 425 contribute to the active site.

It belongs to the GPI family.

The protein resides in the cytoplasm. It carries out the reaction alpha-D-glucose 6-phosphate = beta-D-fructose 6-phosphate. The protein operates within carbohydrate biosynthesis; gluconeogenesis. It functions in the pathway carbohydrate degradation; glycolysis; D-glyceraldehyde 3-phosphate and glycerone phosphate from D-glucose: step 2/4. Its function is as follows. Catalyzes the reversible isomerization of glucose-6-phosphate to fructose-6-phosphate. The protein is Glucose-6-phosphate isomerase of Leuconostoc mesenteroides subsp. mesenteroides (strain ATCC 8293 / DSM 20343 / BCRC 11652 / CCM 1803 / JCM 6124 / NCDO 523 / NBRC 100496 / NCIMB 8023 / NCTC 12954 / NRRL B-1118 / 37Y).